Reading from the N-terminus, the 119-residue chain is Large ribosomal subunit protein bL20c (119 aa).

The protein belongs to the bacterial ribosomal protein bL20 family.

It is found in the plastid. The protein localises to the chloroplast. Binds directly to 23S ribosomal RNA and is necessary for the in vitro assembly process of the 50S ribosomal subunit. It is not involved in the protein synthesizing functions of that subunit. The polypeptide is Large ribosomal subunit protein bL20c (rpl20) (Pinus thunbergii (Japanese black pine)).